A 252-amino-acid polypeptide reads, in one-letter code: 5'-nucleotidase SurE (252 aa).

Residues Asp-8, Asp-9, Ser-39, and Asn-91 each contribute to the a divalent metal cation site.

This sequence belongs to the SurE nucleotidase family. A divalent metal cation is required as a cofactor.

The protein localises to the cytoplasm. It carries out the reaction a ribonucleoside 5'-phosphate + H2O = a ribonucleoside + phosphate. Its function is as follows. Nucleotidase that shows phosphatase activity on nucleoside 5'-monophosphates. The sequence is that of 5'-nucleotidase SurE from Bordetella pertussis (strain Tohama I / ATCC BAA-589 / NCTC 13251).